Here is a 311-residue protein sequence, read N- to C-terminus: MESLNRMALELADEALEFTEELDIGAFELDTGTTVIDFGVEHDGGLEAGLLLAELQTAGLATVQTRVDTVGDATFPHVEVACDQPAVAMLGAQKAGWELAVDDYEALGSGPARALVATEGEFQAIDYVDAFEFAVLTLESTGLPTTAAASEVAARAGVTEESVFLPTYRTASVAGSVSAAARTVELAVFRLYELGYDPTDVLSASGCAPVAPVAGDEQTAIGRTNDALAHGGRVHLTVAEDFDAFDAVVSSAAARYDDPFAEVVGTDDWDAGDVDNGVFGPAQLTVDVVGGPTHAFGTVREDVLADGFGLS.

It belongs to the MCH family.

It is found in the cytoplasm. The enzyme catalyses 5,10-methenyl-5,6,7,8-tetrahydromethanopterin + H2O = N(5)-formyl-5,6,7,8-tetrahydromethanopterin + H(+). Functionally, catalyzes the hydrolysis of methenyl-H(4)MPT(+) to 5-formyl-H(4)MPT. In Halobacterium salinarum (strain ATCC 29341 / DSM 671 / R1), this protein is Methenyltetrahydromethanopterin cyclohydrolase.